Reading from the N-terminus, the 337-residue chain is Inositol 2-dehydrogenase (337 aa).

This sequence belongs to the Gfo/Idh/MocA family. Homotetramer.

It catalyses the reaction myo-inositol + NAD(+) = scyllo-inosose + NADH + H(+). Involved in the oxidation of myo-inositol (MI) to 2-keto-myo-inositol (2KMI or 2-inosose). This Burkholderia cenocepacia (strain HI2424) protein is Inositol 2-dehydrogenase.